A 756-amino-acid chain; its full sequence is Protein psiP (756 aa).

The first 23 residues, 1–23 (MFIQRTFLKVLTLLSIVTVLVHG), serve as a signal peptide directing secretion. Topologically, residues 24–692 (QTQPKDKITL…NCNTGAVVST (669 aa)) are extracellular. An N-linked (GlcNAc...) asparagine glycan is attached at N82. Residues 126 to 281 (LNWNGEAYEY…VDYCGVCEGD (156 aa)) enclose the PA14 domain. N-linked (GlcNAc...) asparagine glycans are attached at residues N359, N483, N564, and N663. The helical transmembrane segment at 693 to 713 (AVIAGSTVAGAVALGIFLYGG) threads the bilayer. Residues 714-756 (KKGYDYWKDSRNISMGSSNSNPLYEEQQTGRGVNPMYDDPAAN) are Cytoplasmic-facing. Polar residues predominate over residues 730–744 (SSNSNPLYEEQQTGR). The disordered stretch occupies residues 730 to 756 (SSNSNPLYEEQQTGRGVNPMYDDPAAN).

It belongs to the prespore-cell-inducing factor family.

Its subcellular location is the membrane. This is Protein psiP (psiP) from Dictyostelium discoideum (Social amoeba).